The sequence spans 371 residues: MPHHYILTLFGLLPVATNISTWWNFGSMLLTCLGLQVLTGFFLAVHYTANINLAFSSIVHISRDVPYGWMMQNLHAIGASMFFICIYIHIARGLYYGSYLNKETWMSGITLLITLMATAFFGYVLTWGQMSLWAATVITNLLTAVPYLGTSLTTWLWGGFAINDPTLTRFFALHFILPFAIISLSSLHIILLHEEGSSNPLGTNPDIDKIPFHPYHSHKDLLLLTLMIMSLFIISSFFPDIFNDPDNFSKANPLVTPQHIKPEWYFLFAYGILRSIPNKLGGALALVMSIMILFIIPFTHTARLRPMTFRPLSQLMFWTLVSTFITITWAATKPVEPPFIVISQVTSSLYFTFFLSTPILGWAENKMMNIS.

The next 4 helical transmembrane spans lie at F25–V45, W69–I90, W105–L125, and F170–I190. Heme b is bound by residues H75 and H89. Residues H174 and H188 each contribute to the heme b site. H193 provides a ligand contact to a ubiquinone. Transmembrane regions (helical) follow at residues H218–F238, L280–H300, L312–T332, and F339–P358.

The protein belongs to the cytochrome b family. The cytochrome bc1 complex contains 3 respiratory subunits (MT-CYB, CYC1 and UQCRFS1), 2 core proteins (UQCRC1 and UQCRC2) and probably 6 low-molecular weight proteins. Requires heme b as cofactor.

It is found in the mitochondrion inner membrane. In terms of biological role, component of the ubiquinol-cytochrome c reductase complex (complex III or cytochrome b-c1 complex) that is part of the mitochondrial respiratory chain. The b-c1 complex mediates electron transfer from ubiquinol to cytochrome c. Contributes to the generation of a proton gradient across the mitochondrial membrane that is then used for ATP synthesis. The polypeptide is Cytochrome b (MT-CYB) (Aspidites melanocephalus (Black-headed python)).